We begin with the raw amino-acid sequence, 88 residues long: Chaplin-F (88 aa).

Residues 1–36 (MYNPKEHFSMSRIAKGLALTSVAAAAVAGTAGVAAA) form the signal peptide. The region spanning 47 to 87 (SPGVLSGNVVQVPVHIPVNVCGNTIDVIGLLNPAFGNECEN) is the Chaplin domain. An intrachain disulfide couples Cys67 to Cys85.

Belongs to the chaplin family. Short chaplin subfamily. In terms of assembly, homodimer; disulfide linked. About 20% of ChpF isolated from cell wall forms disulfide-bonded homodimers.

It localises to the cell surface. The protein resides in the secreted. Its subcellular location is the cell wall. It is found in the fimbrium. Its function is as follows. One of 8 partially redundant surface-active proteins required for efficient formation of aerial mycelium; the short chaplins assemble into a hydrophobic, amyloidal fibrillar surface layer that envelopes and protects aerial hyphae and spores, presumably anchored to the long chaplins. Chaplins have an overlapping function with the surface-active SapB peptide; chaplins are essential on minimal medium while on rich medium both chaplins and SapB are required for efficient aerial hyphae formation. Chaplins are also involved in cell attachment to a hydrophobic surface. Forms amyloid fibrils in vitro probably composed of stacked beta-sheets, at low extracellular concentrations individually restores the ability to form aerial hyphae to a chaplin-deficient strain. A small chaplin extract (ChpD, ChpE, ChpF, ChpG and ChpH) self-assembles into 2 different amyloids; small fibrils at the air-water interface form an amphipathic membrane that resembles spore-surface structures involved in aerial hyphae formation, and hydrophilic fibrils in solution that resemble the fibers that attach cells to a hydrophobic surface. At the air-water interface the hydrophilic surface is in contact with water (probably equivalent to the peptidoglycan layer), while the hydrophobic face is exposed to the air, making the surface of the aerial hyphae hydrophobic. A small chaplin extract applied to a chaplin-deficient strain restores aerial hyphae formation. The small chaplin extract forms an amyloid-like structure similar to that seen on the surface of cells without rodlets (rdlA-rdlB deletions), and is highly surface active, reducing surface tension from 72 to 26 mJ/m(2), which probably allows escape of hyphae from an aqueous environment into air. ChpF alone is less surface active at pH 3.0 than at pH 10.0, it reduces the surface tension of water from 72.8 mN/m to 50 mN/m at pH 3.0 or to 37 mN/m at pH 10.0. ChpF and ChpG are sufficient to restore the rodlet layer and hydrophobicity to a strain deleted for the other 6 chaplin genes. The chain is Chaplin-F from Streptomyces coelicolor (strain ATCC BAA-471 / A3(2) / M145).